The primary structure comprises 739 residues: Cleavage and polyadenylation specificity factor subunit 2 (739 aa).

Over residues 411 to 423 (VKEEETKASHGSD) the composition is skewed to basic and acidic residues. Residues 411-430 (VKEEETKASHGSDDNSSEPM) are disordered.

This sequence belongs to the metallo-beta-lactamase superfamily. RNA-metabolizing metallo-beta-lactamase-like family. CPSF2/YSH1 subfamily. In terms of assembly, component of the CPSF complex, at least composed of CPSF160, CPSF100, CPSF73-I, CPSF73-II, CPSF30, FY and FIPS5. Forms a complex with cleavage and polyadenylation specificity factor (CPSF) subunits FY, PAPS2, CSTF50, CPSF30, CPSF73-I, CPSF73-II and CPSF160.

It is found in the nucleus. It localises to the cytoplasm. CPSF plays a key role in pre-mRNA 3'-end formation, recognizing the AAUAAA signal sequence and interacting with poly(A)polymerase and other factors to bring about cleavage and poly(A) addition. Required for antisense-RNA-mediated gene silencing. The chain is Cleavage and polyadenylation specificity factor subunit 2 (CPSF100) from Arabidopsis thaliana (Mouse-ear cress).